The following is a 344-amino-acid chain: GDSL esterase/lipase At1g73610 (344 aa).

Positions 1 to 24 are cleaved as a signal peptide; the sequence is MNCLMFFKMLLAFSFISLFYVGNA. N-linked (GlcNAc...) asparagine glycosylation occurs at N30. The Nucleophile role is filled by S42. Catalysis depends on residues D319 and H322.

Belongs to the 'GDSL' lipolytic enzyme family.

Its subcellular location is the secreted. The polypeptide is GDSL esterase/lipase At1g73610 (Arabidopsis thaliana (Mouse-ear cress)).